The following is a 62-amino-acid chain: MVRVNRENRSTFLRVKCPDCENEQVVFERASTVVECTVCGRILAEPHGGKADIKAEIMAVLE.

Residues Cys17, Cys20, Cys36, and Cys39 each coordinate Zn(2+). Residues 17 to 39 (CPDCENEQVVFERASTVVECTVC) form a C4-type zinc finger.

This sequence belongs to the eukaryotic ribosomal protein eS27 family. As to quaternary structure, part of the 30S ribosomal subunit. Requires Zn(2+) as cofactor.

The protein is Small ribosomal subunit protein eS27 of Methanoculleus marisnigri (strain ATCC 35101 / DSM 1498 / JR1).